The sequence spans 362 residues: G-protein coupled receptor 6 (362 aa).

Topologically, residues 1 to 74 are extracellular; it reads MNASAASLND…PGLLLPAVNP (74 aa). Asparagine 2, asparagine 9, and asparagine 51 each carry an N-linked (GlcNAc...) asparagine glycan. A helical membrane pass occupies residues 75–94; sequence WDVLLCVSGTVIAGENALVV. Residues 95 to 106 are Cytoplasmic-facing; it reads ALIASTPALRTP. Residues 107-130 form a helical membrane-spanning segment; sequence MFVLVGSLATADLLAGCGLILHFV. At 131-142 the chain is on the extracellular side; the sequence is FQYLVPSETVSL. The chain crosses the membrane as a helical span at residues 143–164; the sequence is LTVGFLVASFAASVSSLLAITV. Residues 165–185 lie on the Cytoplasmic side of the membrane; the sequence is DRYLSLYNALTYYSRRTLLGV. The chain crosses the membrane as a helical span at residues 186-205; sequence HLLLAATWTVSLGLGLLPVL. The Extracellular portion of the chain corresponds to 206-230; the sequence is GWNCLAERAACSVVRPLARSHVALL. A helical membrane pass occupies residues 231 to 249; the sequence is SAAFFMVFGIMLHLYVRIC. The Cytoplasmic portion of the chain corresponds to 250–277; it reads QVVWRHAHQIALQQHCLAPPHLAATRKG. Residues 278-304 traverse the membrane as a helical segment; that stretch reads VGTLAVVLGTFGASWLPFAIYCVVGSH. Topologically, residues 305–309 are extracellular; sequence EDPAV. Residues 310 to 331 form a helical membrane-spanning segment; sequence YTYATLLPATYNSMINPIIYAF. The Cytoplasmic portion of the chain corresponds to 332-362; it reads RNQEIQRALWLLLCGCFQSKVPFRSRSPSEV. A lipid anchor (S-palmitoyl cysteine) is attached at cysteine 345. 3 positions are modified to phosphoserine: serine 356, serine 358, and serine 360.

This sequence belongs to the G-protein coupled receptor 1 family.

The protein resides in the cell membrane. In terms of biological role, orphan receptor with constitutive G(s) signaling activity that activate cyclic AMP. Promotes neurite outgrowth and blocks myelin inhibition in neurons. This is G-protein coupled receptor 6 (GPR6) from Homo sapiens (Human).